A 92-amino-acid polypeptide reads, in one-letter code: Probable Fe(2+)-trafficking protein (92 aa).

It belongs to the Fe(2+)-trafficking protein family.

In terms of biological role, could be a mediator in iron transactions between iron acquisition and iron-requiring processes, such as synthesis and/or repair of Fe-S clusters in biosynthetic enzymes. The chain is Probable Fe(2+)-trafficking protein from Shewanella loihica (strain ATCC BAA-1088 / PV-4).